The primary structure comprises 105 residues: Thioredoxin (105 aa).

Residues 1–105 (MANNVTDSSF…SLLDWINKSI (105 aa)) enclose the Thioredoxin domain. An intrachain disulfide couples C30 to C33.

It belongs to the thioredoxin family.

Component of the thioredoxin-thioredoxin reductase system. Participates in various redox reactions through the reversible oxidation of its active center dithiol to a disulfide and catalyzes dithiol-disulfide exchange reactions. The sequence is that of Thioredoxin (trxA) from Rickettsia felis (strain ATCC VR-1525 / URRWXCal2) (Rickettsia azadi).